Consider the following 357-residue polypeptide: Probable dual-specificity RNA methyltransferase RlmN (357 aa).

E95 (proton acceptor) is an active-site residue. The Radical SAM core domain occupies 106 to 340 (NRDRHTVCVS…VSVREEKGTD (235 aa)). C113 and C345 form a disulfide bridge. Residues C120, C124, and C127 each coordinate [4Fe-4S] cluster. S-adenosyl-L-methionine is bound by residues 172 to 173 (GE), S204, 227 to 229 (SLH), and N302. C345 functions as the S-methylcysteine intermediate in the catalytic mechanism.

Belongs to the radical SAM superfamily. RlmN family. Requires [4Fe-4S] cluster as cofactor.

It is found in the cytoplasm. It carries out the reaction adenosine(2503) in 23S rRNA + 2 reduced [2Fe-2S]-[ferredoxin] + 2 S-adenosyl-L-methionine = 2-methyladenosine(2503) in 23S rRNA + 5'-deoxyadenosine + L-methionine + 2 oxidized [2Fe-2S]-[ferredoxin] + S-adenosyl-L-homocysteine. The catalysed reaction is adenosine(37) in tRNA + 2 reduced [2Fe-2S]-[ferredoxin] + 2 S-adenosyl-L-methionine = 2-methyladenosine(37) in tRNA + 5'-deoxyadenosine + L-methionine + 2 oxidized [2Fe-2S]-[ferredoxin] + S-adenosyl-L-homocysteine. In terms of biological role, specifically methylates position 2 of adenine 2503 in 23S rRNA and position 2 of adenine 37 in tRNAs. The sequence is that of Probable dual-specificity RNA methyltransferase RlmN from Desulfitobacterium hafniense (strain DSM 10664 / DCB-2).